Reading from the N-terminus, the 218-residue chain is MDKSESTSAGRNRRRRLRRGSRSAPSSADANFRVLSQQLSRLNKTLSAGRPTINHPTFVGSERCKPGYTFTSITLKPPKIDRGSYYGKRLLLPDSVTEYDKKLVSRIQIRVNPLPKFDSTVWVTVRKVPASSDLSVAAISAMFADGASPVLVYQYAASGVQANNKLLYDLSAMRADIGDMRKYAVLVYSKDDTLETDELVLHVDVEHQRIPTSGVLPV.

The residue at position 1 (M1) is an N-acetylmethionine; by host. The span at 1–10 (MDKSESTSAG) shows a compositional bias: low complexity. The interval 1-29 (MDKSESTSAGRNRRRRLRRGSRSAPSSAD) is disordered. Over residues 11-21 (RNRRRRLRRGS) the composition is skewed to basic residues.

The protein belongs to the cucumovirus capsid protein family.

Its subcellular location is the virion. Capsid protein. Probably binds RNA and plays a role in packaging. The polypeptide is Capsid protein (Cucumis sativus (Cucumber)).